Consider the following 80-residue polypeptide: MKPEIHPIYREVVFHDVTSNFKFLTRSTMSTKETTLWEDGREYPLVKVEISSASHPFYTGKHKLVDTSGRIDKFKKRYAR.

This sequence belongs to the bacterial ribosomal protein bL31 family. Type B subfamily. As to quaternary structure, part of the 50S ribosomal subunit.

In Xylella fastidiosa (strain 9a5c), this protein is Large ribosomal subunit protein bL31B.